A 38-amino-acid chain; its full sequence is Photosystem II reaction center protein X 1 (38 aa).

The chain crosses the membrane as a helical span at residues 8-28 (FLWSLLYGAVVLGLLFGAIVF).

The protein belongs to the PsbX family. Type 1 subfamily. As to quaternary structure, PSII is composed of 1 copy each of membrane proteins PsbA, PsbB, PsbC, PsbD, PsbE, PsbF, PsbH, PsbI, PsbJ, PsbK, PsbL, PsbM, PsbT, PsbX, PsbY, PsbZ, Psb30/Ycf12, peripheral proteins PsbO, CyanoQ (PsbQ), PsbU, PsbV and a large number of cofactors. It forms dimeric complexes.

The protein resides in the cellular thylakoid membrane. Functionally, involved in the binding and/or turnover of quinones at the Q(B) site of photosystem II (PSII). PSII is a light-driven water plastoquinone oxidoreductase, using light energy to abstract electrons from H(2)O, generating a proton gradient subsequently used for ATP formation. The sequence is that of Photosystem II reaction center protein X 1 from Synechococcus sp. (strain JA-3-3Ab) (Cyanobacteria bacterium Yellowstone A-Prime).